We begin with the raw amino-acid sequence, 725 residues long: Methionine--tRNA ligase (725 aa).

A 'HIGH' region motif is present at residues proline 27 to histidine 37. Positions 158, 161, 171, and 174 each coordinate Zn(2+). The 'KMSKS' region motif lies at lysine 348–serine 352. Residue lysine 351 coordinates ATP. The 107-residue stretch at aspartate 619–lysine 725 folds into the tRNA-binding domain.

The protein belongs to the class-I aminoacyl-tRNA synthetase family. MetG type 1 subfamily. In terms of assembly, homodimer. Requires Zn(2+) as cofactor.

The protein localises to the cytoplasm. It catalyses the reaction tRNA(Met) + L-methionine + ATP = L-methionyl-tRNA(Met) + AMP + diphosphate. Its function is as follows. Is required not only for elongation of protein synthesis but also for the initiation of all mRNA translation through initiator tRNA(fMet) aminoacylation. The chain is Methionine--tRNA ligase from Burkholderia pseudomallei (strain 1710b).